The chain runs to 154 residues: Myoglobin (154 aa).

Residues 2-148 (GLSDQEWQQV…FRNDMASKYK (147 aa)) enclose the Globin domain. Residue histidine 65 coordinates nitrite. O2 is bound at residue histidine 65. A heme b-binding site is contributed by histidine 94.

Belongs to the globin family. In terms of assembly, monomeric.

The protein localises to the cytoplasm. It is found in the sarcoplasm. It carries out the reaction Fe(III)-heme b-[protein] + nitric oxide + H2O = Fe(II)-heme b-[protein] + nitrite + 2 H(+). It catalyses the reaction H2O2 + AH2 = A + 2 H2O. Its function is as follows. Monomeric heme protein which primary function is to store oxygen and facilitate its diffusion within muscle tissues. Reversibly binds oxygen through a pentacoordinated heme iron and enables its timely and efficient release as needed during periods of heightened demand. Depending on the oxidative conditions of tissues and cells, and in addition to its ability to bind oxygen, it also has a nitrite reductase activity whereby it regulates the production of bioactive nitric oxide. Under stress conditions, like hypoxia and anoxia, it also protects cells against reactive oxygen species thanks to its pseudoperoxidase activity. The sequence is that of Myoglobin (MB) from Gallus gallus (Chicken).